The chain runs to 194 residues: A-type ATP synthase subunit E (194 aa).

This sequence belongs to the V-ATPase E subunit family. In terms of assembly, has multiple subunits with at least A(3), B(3), C, D, E, F, H, I and proteolipid K(x).

The protein resides in the cell membrane. Functionally, component of the A-type ATP synthase that produces ATP from ADP in the presence of a proton gradient across the membrane. This is A-type ATP synthase subunit E from Saccharolobus solfataricus (strain ATCC 35092 / DSM 1617 / JCM 11322 / P2) (Sulfolobus solfataricus).